Consider the following 454-residue polypeptide: Glycosyl hydrolase family 109 protein (454 aa).

Residues 1 to 29 (MFAMKRREFIAASAAVAASSLLPQTPAWA) constitute a signal peptide (tat-type signal). NAD(+)-binding positions include 43-44 (MR), Asp65, 116-119 (WEYH), 136-137 (EV), and Asn165. Position 194 (Tyr194) interacts with substrate. 224-228 (SEARW) serves as a coordination point for NAD(+). Substrate contacts are provided by residues Arg229, 241–244 (YPSH), and Tyr324. Position 241 (Tyr241) interacts with NAD(+).

It belongs to the Gfo/Idh/MocA family. Glycosyl hydrolase 109 subfamily. Requires NAD(+) as cofactor. Post-translationally, predicted to be exported by the Tat system. The position of the signal peptide cleavage has not been experimentally proven.

Glycosidase. The polypeptide is Glycosyl hydrolase family 109 protein (Stenotrophomonas maltophilia (strain K279a)).